The following is a 3120-amino-acid chain: DNA-directed RNA polymerase subunit beta'' (3120 aa).

4 residues coordinate Zn(2+): cysteine 323, cysteine 396, cysteine 403, and cysteine 406. Positions 595 to 1130 (FIGEGKQNVL…LKTLVLKKWF (536 aa)) are insert-1. The insert-2 stretch occupies residues 1796–2346 (KGHLVAYARP…NGIIQAKSLL (551 aa)). Residues 2422 to 2610 (NSNFLENTHF…PEGEGEKDMT (189 aa)) form an insert-3 region. Positions 2726–2801 (FSKKRWKKSI…KQNQTIILAL (76 aa)) are insert-4. Residues 2856–2996 (ASKMSEYMFS…LNQLLSNNLD (141 aa)) are insert-5. Positions 2926–2956 (EGIDSSKIPSSNIPEGKVTQNNKRKSTRKNV) are disordered. The segment covering 2932-2946 (KIPSSNIPEGKVTQN) has biased composition (polar residues).

Belongs to the RNA polymerase beta' chain family. RpoC2 subfamily. In plastids the minimal PEP RNA polymerase catalytic core is composed of four subunits: alpha, beta, beta', and beta''. When a (nuclear-encoded) sigma factor is associated with the core the holoenzyme is formed, which can initiate transcription. Zn(2+) serves as cofactor.

It is found in the plastid. It localises to the chloroplast. The enzyme catalyses RNA(n) + a ribonucleoside 5'-triphosphate = RNA(n+1) + diphosphate. Functionally, DNA-dependent RNA polymerase catalyzes the transcription of DNA into RNA using the four ribonucleoside triphosphates as substrates. In Chlamydomonas reinhardtii (Chlamydomonas smithii), this protein is DNA-directed RNA polymerase subunit beta''.